Here is a 358-residue protein sequence, read N- to C-terminus: Nicotinate-nucleotide--dimethylbenzimidazole phosphoribosyltransferase (358 aa).

The active-site Proton acceptor is the Glu323.

Belongs to the CobT family.

The enzyme catalyses 5,6-dimethylbenzimidazole + nicotinate beta-D-ribonucleotide = alpha-ribazole 5'-phosphate + nicotinate + H(+). It participates in nucleoside biosynthesis; alpha-ribazole biosynthesis; alpha-ribazole from 5,6-dimethylbenzimidazole: step 1/2. In terms of biological role, catalyzes the synthesis of alpha-ribazole-5'-phosphate from nicotinate mononucleotide (NAMN) and 5,6-dimethylbenzimidazole (DMB). This Oleidesulfovibrio alaskensis (strain ATCC BAA-1058 / DSM 17464 / G20) (Desulfovibrio alaskensis) protein is Nicotinate-nucleotide--dimethylbenzimidazole phosphoribosyltransferase.